The chain runs to 112 residues: Nitrogen regulatory protein GlnK2 (112 aa).

ADP-binding positions include Thr29, 38 to 39 (QQ), Val64, and 87 to 90 (GDGK). ATP-binding positions include Thr29, 38-39 (QQ), Val64, 87-90 (GDGK), and 101-103 (RIR).

It belongs to the P(II) protein family. As to quaternary structure, homotrimer. Interacts and forms a complex with Amt2.

The protein localises to the cytoplasm. With respect to regulation, binding of adenosine nucleotides results in distinct, cooperative behavior for ATP and ADP. GlnK2 is completely insensitive to 2-oxoglutarate at a low level of intracellular nitrogen. Involved in the regulation of nitrogen metabolism. Regulates the activity of its targets by protein-protein interaction in response to the nitrogen status of the cell. Regulates the activity of the ammonia channel Amt2 via direct interaction. This chain is Nitrogen regulatory protein GlnK2, found in Archaeoglobus fulgidus (strain ATCC 49558 / DSM 4304 / JCM 9628 / NBRC 100126 / VC-16).